The chain runs to 160 residues: MD-2-related lipid-recognition protein ROSY1 (160 aa).

Residues 1–23 form the signal peptide; that stretch reads MAISHTQLLLLLLVSLFFSPALC.

In terms of assembly, interacts with SYT1. As to expression, expressed exclusively in roots, in epidermis and cortex cells of the root elongation zone, and lateral root cap cells at the root tip.

The protein localises to the cytoplasm. Its function is as follows. Involved in the regulation of gravitropic response and basipetal auxin transport in roots. Involved in salt stress tolerance. May facilitate membrane trafficking and asymmetric cell elongation via SYT1. Binds stigmasterol and dipalmitoyl phosphoethanolamine (DPPE) in vitro. The protein is MD-2-related lipid-recognition protein ROSY1 of Arabidopsis thaliana (Mouse-ear cress).